The sequence spans 309 residues: Assembly-complementing factor 4 (309 aa).

3 disordered regions span residues 1–80 (MSED…ASPI), 164–240 (KSIN…ENTP), and 286–309 (VRSEDEDDEEFEPMGDIPVHLFKR). Basic and acidic residues-rich tracts occupy residues 13–24 (ELHKLSIVDKHS) and 34–44 (KQHEVQPESKS). A phosphoserine mark is found at Ser44, Ser71, Ser74, Ser78, and Ser165. Positions 61-80 (SSPQRSTTNQSPVSDHASPI) are enriched in polar residues. Low complexity-rich tracts occupy residues 174–188 (NNNVNSNINNTLPNR), 205–214 (PSRSSESTPT), and 222–239 (PRNTMKNANTTATAGENT). The span at 287–298 (RSEDEDDEEFEP) shows a compositional bias: acidic residues. Ser288 carries the post-translational modification Phosphoserine.

Functionally, may be involved in actin cytoskeleton organization and biogenesis. This Saccharomyces cerevisiae (strain ATCC 204508 / S288c) (Baker's yeast) protein is Assembly-complementing factor 4 (ACF4).